The primary structure comprises 191 residues: MMIKQAEFITSAVSITDLPKDDFDHFLILGRSNVGKSSLINAITNRKKLARVSQTPGKTITLNLYLLNQSLYLVDAPGYGYAKRSKTQTLTFMRMINEYIQLNGHLKKIILLVDFNIGPTQDDLDMYIELQAFDVDIIVVTTKYDKVKSSHRLKQEKVIRSKFFEGQKIYFTSSETKFGIDKLINEEFSNE.

Residues 22–191 (DFDHFLILGR…KLINEEFSNE (170 aa)) enclose the EngB-type G domain. Residues 30–37 (GRSNVGKS), 57–61 (GKTIT), 75–78 (DAPG), 142–145 (TKYD), and 172–174 (TSS) contribute to the GTP site. Mg(2+)-binding residues include Ser37 and Thr59.

Belongs to the TRAFAC class TrmE-Era-EngA-EngB-Septin-like GTPase superfamily. EngB GTPase family. It depends on Mg(2+) as a cofactor.

Its function is as follows. Necessary for normal cell division and for the maintenance of normal septation. This is Probable GTP-binding protein EngB from Acholeplasma laidlawii (strain PG-8A).